We begin with the raw amino-acid sequence, 463 residues long: L-seryl-tRNA(Sec) selenium transferase (463 aa).

The residue at position 295 (K295) is an N6-(pyridoxal phosphate)lysine.

This sequence belongs to the SelA family. As to quaternary structure, homodecamer; pentamer of dimers. Binds only one seryl-tRNA(Sec) per dimer. It depends on pyridoxal 5'-phosphate as a cofactor.

It localises to the cytoplasm. It carries out the reaction L-seryl-tRNA(Sec) + selenophosphate + H(+) = L-selenocysteinyl-tRNA(Sec) + phosphate. Its pathway is aminoacyl-tRNA biosynthesis; selenocysteinyl-tRNA(Sec) biosynthesis; selenocysteinyl-tRNA(Sec) from L-seryl-tRNA(Sec) (bacterial route): step 1/1. Converts seryl-tRNA(Sec) to selenocysteinyl-tRNA(Sec) required for selenoprotein biosynthesis. This chain is L-seryl-tRNA(Sec) selenium transferase, found in Shigella boydii serotype 4 (strain Sb227).